The primary structure comprises 320 residues: uncharacterized protein (320 aa).

Position 61 is an omega-N-methylarginine (Arg-61). The interval 299 to 320 (LHLQHQKQTSKDAGRQTPERKA) is disordered. Residues 307-320 (TSKDAGRQTPERKA) show a composition bias toward basic and acidic residues. Thr-315 is subject to Phosphothreonine.

This is an uncharacterized protein from Mus musculus (Mouse).